Here is a 188-residue protein sequence, read N- to C-terminus: Small ribosomal subunit protein uS7 (188 aa).

This sequence belongs to the universal ribosomal protein uS7 family. Part of the 30S ribosomal subunit.

In terms of biological role, one of the primary rRNA binding proteins, it binds directly to 16S rRNA where it nucleates assembly of the head domain of the 30S subunit. Is located at the subunit interface close to the decoding center. In Methanococcus aeolicus (strain ATCC BAA-1280 / DSM 17508 / OCM 812 / Nankai-3), this protein is Small ribosomal subunit protein uS7.